The sequence spans 359 residues: tRNA-specific 2-thiouridylase MnmA (359 aa).

Residues 6 to 13 (AMSGGVDS) and L32 contribute to the ATP site. Catalysis depends on C97, which acts as the Nucleophile. A disulfide bridge links C97 with C195. G121 contacts ATP. An interaction with tRNA region spans residues 144–146 (KDQ). The Cysteine persulfide intermediate role is filled by C195.

This sequence belongs to the MnmA/TRMU family.

The protein resides in the cytoplasm. The enzyme catalyses S-sulfanyl-L-cysteinyl-[protein] + uridine(34) in tRNA + AH2 + ATP = 2-thiouridine(34) in tRNA + L-cysteinyl-[protein] + A + AMP + diphosphate + H(+). Catalyzes the 2-thiolation of uridine at the wobble position (U34) of tRNA, leading to the formation of s(2)U34. This chain is tRNA-specific 2-thiouridylase MnmA, found in Tropheryma whipplei (strain TW08/27) (Whipple's bacillus).